The primary structure comprises 590 residues: FAD-linked oxidoreductase malF (590 aa).

The first 18 residues, 1-18, serve as a signal peptide directing secretion; sequence MKYTATFALLILAIGIQT. N44, N80, N103, N178, and N396 each carry an N-linked (GlcNAc...) asparagine glycan. An FAD-binding PCMH-type domain is found at 117–303; the sequence is AQGRIPLYSA…TSVTLRAFAD (187 aa).

Belongs to the oxygen-dependent FAD-linked oxidoreductase family. FAD serves as cofactor.

Its function is as follows. FAD-linked oxidoreductase; part of the gene cluster that mediates the biosynthesis of malbrancheamide, a dichlorinated fungal indole alkaloid that belongs to a family of natural products containing a characteristic bicyclo[2.2.2]diazaoctane core. The first step of malbrancheamide biosynthesis involves coupling of L-proline and L-tryptophan by malG, a bimodular NRPS, to produce L-Pro-L-Trp aldehyde through reductive offloading. This compound undergoes spontaneous cyclization and dehydration to give a dienamine which is reverse prenylated at C-2 by malE. The other prenyltransferase present in the cluster, malB, displays modest activity, suggesting that may be a redundant gene in the pathway. Subsequently, a [4+2] Diels-Alder cyclo-addition catalyzed by the bifunctional enzyme malC forms the characteristic bicyclo[2.2.2]diazaoctane ring of premalbrancheamid. Finally, the flavin-dependent halogenase malA catalyzes the iterative dichlorination of the indole ring of premalbrancheamide to yield C-9 monochlorinated malbrancheamide B, C-8 monochlorinated isomalbrancheamide B, and dichlorinated malbrancheamide. MalA is also able to brominate premalbrancheamide at C-9 to yield malbrancheamide C, and, to a lesser extend, at C-8 to yield isomalbrancheamide C. Finally, malA can brominate C-9 monochlorinated malbrancheamide B at C-8 to yield malbrancheamide D, or C-8 monochlorinated isomalbrancheamide B at C-9 to produce isomalbrancheamide D. The chain is FAD-linked oxidoreductase malF from Malbranchea aurantiaca.